Reading from the N-terminus, the 426-residue chain is Histidine--tRNA ligase (426 aa).

The protein belongs to the class-II aminoacyl-tRNA synthetase family. Homodimer.

It localises to the cytoplasm. The enzyme catalyses tRNA(His) + L-histidine + ATP = L-histidyl-tRNA(His) + AMP + diphosphate + H(+). This Streptococcus thermophilus (strain CNRZ 1066) protein is Histidine--tRNA ligase.